The chain runs to 88 residues: Probable oxaloacetate decarboxylase gamma chain (88 aa).

Residues leucine 13–valine 35 traverse the membrane as a helical segment.

The protein belongs to the OadG family. In terms of assembly, heterotrimer of an alpha, a beta and a gamma subunit. Requires Na(+) as cofactor.

Its subcellular location is the cell membrane. The enzyme catalyses oxaloacetate + 2 Na(+)(in) + H(+) = pyruvate + 2 Na(+)(out) + CO2. In terms of biological role, catalyzes the decarboxylation of oxaloacetate coupled to Na(+) translocation. This is Probable oxaloacetate decarboxylase gamma chain from Mannheimia succiniciproducens (strain KCTC 0769BP / MBEL55E).